A 760-amino-acid chain; its full sequence is Sphingosine kinase B (760 aa).

A disordered region spans residues 1–108 (MENNNNEPAE…NNNNNEPVTS (108 aa)). The span at 12–39 (VQEKGPKLKNDIDLNDQFKDEKEKKEEI) shows a compositional bias: basic and acidic residues. Over residues 40 to 106 (SSSSIENKNN…NNNNNNNEPV (67 aa)) the composition is skewed to low complexity. The region spanning 247 to 383 (PKNRKIRILI…LDVCIVQQPT (137 aa)) is the DAGKc domain. Residues 257–259 (NPK) and Thr-288 contribute to the ATP site. Substrate is bound at residue 313 to 316 (SGDG). The Proton donor/acceptor role is filled by Asp-315. ATP is bound by residues Glu-320 and 345–347 (GTG). The tract at residues 394-438 (TVTTTTTTTSPTSASPTITSANNNNNNNNNNNNNNNNNNNNNNNN) is disordered. Asp-461 is a substrate binding site. The ATP site is built by Arg-468 and Arg-474. Residues 535-605 (DNDNNNKNKN…SSPRSDINMS (71 aa)) are disordered. Residues 549–597 (EINSTTSNNNNNNNTTTTSTSSSTSTSTSTSSLTATTTTAKSTNSLSSS) show a composition bias toward low complexity. An ATP-binding site is contributed by 734-736 (DGE).

It carries out the reaction a sphingoid base + ATP = a sphingoid 1-phosphate + ADP + H(+). Inhibited by N,N,-dimethylsphingosine. In terms of biological role, catalyzes the phosphorylation of sphingosine to form sphingosine-1-phosphate (S1P), which probably acts intracellularly as a second messenger perhaps by promoting cell proliferation. This is Sphingosine kinase B (sgkB) from Dictyostelium discoideum (Social amoeba).